The chain runs to 201 residues: 3-isopropylmalate dehydratase small subunit (201 aa).

It belongs to the LeuD family. LeuD type 1 subfamily. Heterodimer of LeuC and LeuD.

The catalysed reaction is (2R,3S)-3-isopropylmalate = (2S)-2-isopropylmalate. The protein operates within amino-acid biosynthesis; L-leucine biosynthesis; L-leucine from 3-methyl-2-oxobutanoate: step 2/4. Functionally, catalyzes the isomerization between 2-isopropylmalate and 3-isopropylmalate, via the formation of 2-isopropylmaleate. This chain is 3-isopropylmalate dehydratase small subunit, found in Cereibacter sphaeroides (strain ATCC 17029 / ATH 2.4.9) (Rhodobacter sphaeroides).